The primary structure comprises 296 residues: Cytidine deaminase (296 aa).

CMP/dCMP-type deaminase domains follow at residues 47–167 and 186–296; these read TEAE…FGPK and DSSD…VDPV. 88–90 is a binding site for substrate; it reads NLE. H101 contributes to the Zn(2+) binding site. Residue E103 is the Proton donor of the active site. Residues C128 and C131 each coordinate Zn(2+).

Belongs to the cytidine and deoxycytidylate deaminase family. In terms of assembly, homodimer. Requires Zn(2+) as cofactor.

It carries out the reaction cytidine + H2O + H(+) = uridine + NH4(+). It catalyses the reaction 2'-deoxycytidine + H2O + H(+) = 2'-deoxyuridine + NH4(+). Functionally, this enzyme scavenges exogenous and endogenous cytidine and 2'-deoxycytidine for UMP synthesis. This is Cytidine deaminase from Shewanella sp. (strain MR-7).